The chain runs to 457 residues: Bifunctional protein GlmU (457 aa).

The pyrophosphorylase stretch occupies residues 1 to 229; that stretch reads MSNSAKSVVI…HSEMEGVNNR (229 aa). UDP-N-acetyl-alpha-D-glucosamine is bound by residues 11-14, Lys25, Gln76, 81-82, 103-105, Gly140, Glu154, Asn169, and Asn227; these read LAAG, GT, and YGD. Asp105 is a Mg(2+) binding site. Asn227 contacts Mg(2+). The linker stretch occupies residues 230–250; that stretch reads LQLAALERIYQTEQAERLLLE. The interval 251-457 is N-acetyltransferase; the sequence is GVMLLDPARF…GWKRPVKKKQ (207 aa). Arg333 and Lys351 together coordinate UDP-N-acetyl-alpha-D-glucosamine. His363 functions as the Proton acceptor in the catalytic mechanism. The UDP-N-acetyl-alpha-D-glucosamine site is built by Tyr366 and Asn377. Acetyl-CoA is bound by residues Ala380, 386–387, Ser405, Ala423, and Arg440; that span reads NY.

This sequence in the N-terminal section; belongs to the N-acetylglucosamine-1-phosphate uridyltransferase family. In the C-terminal section; belongs to the transferase hexapeptide repeat family. As to quaternary structure, homotrimer. It depends on Mg(2+) as a cofactor.

It localises to the cytoplasm. The enzyme catalyses alpha-D-glucosamine 1-phosphate + acetyl-CoA = N-acetyl-alpha-D-glucosamine 1-phosphate + CoA + H(+). It carries out the reaction N-acetyl-alpha-D-glucosamine 1-phosphate + UTP + H(+) = UDP-N-acetyl-alpha-D-glucosamine + diphosphate. The protein operates within nucleotide-sugar biosynthesis; UDP-N-acetyl-alpha-D-glucosamine biosynthesis; N-acetyl-alpha-D-glucosamine 1-phosphate from alpha-D-glucosamine 6-phosphate (route II): step 2/2. Its pathway is nucleotide-sugar biosynthesis; UDP-N-acetyl-alpha-D-glucosamine biosynthesis; UDP-N-acetyl-alpha-D-glucosamine from N-acetyl-alpha-D-glucosamine 1-phosphate: step 1/1. It participates in bacterial outer membrane biogenesis; LPS lipid A biosynthesis. Its function is as follows. Catalyzes the last two sequential reactions in the de novo biosynthetic pathway for UDP-N-acetylglucosamine (UDP-GlcNAc). The C-terminal domain catalyzes the transfer of acetyl group from acetyl coenzyme A to glucosamine-1-phosphate (GlcN-1-P) to produce N-acetylglucosamine-1-phosphate (GlcNAc-1-P), which is converted into UDP-GlcNAc by the transfer of uridine 5-monophosphate (from uridine 5-triphosphate), a reaction catalyzed by the N-terminal domain. The protein is Bifunctional protein GlmU of Proteus mirabilis (strain HI4320).